Consider the following 661-residue polypeptide: Putative DUF21 domain-containing protein At3g13070, chloroplastic (661 aa).

Residues 1–71 (MMGMALELSV…RSCEFSYRSR (71 aa)) constitute a chloroplast transit peptide. A run of 5 helical transmembrane segments spans residues 105 to 125 (GIVIGALVCGVFLYGCQKVLA), 162 to 182 (GLILAALLSLSAFFSMAETSI), 213 to 233 (FLTTILIGTTVVNIAATALVT), 239 to 259 (IFGEAGVSAATGLMTVAILLL), and 285 to 305 (WLSLVLYPVGRIVTYLSMGIL). The region spanning 154–340 (VLTVLREQGL…ELSGAIEEEE (187 aa)) is the CNNM transmembrane domain. CBS domains follow at residues 359–420 (MTPL…LLES) and 426–484 (MAHK…IFDE). Disordered stretches follow at residues 559 to 578 (ESWEEDGEEEEGKQERQEPK) and 628 to 661 (SSEEDDGNLSNEEDQSENAVLDEHVLADNSKKQQ). Acidic residues-rich tracts occupy residues 560 to 570 (SWEEDGEEEEG) and 630 to 643 (EEDDGNLSNEEDQS). Residues 648–661 (LDEHVLADNSKKQQ) show a composition bias toward basic and acidic residues.

It is found in the plastid. The protein resides in the chloroplast membrane. This Arabidopsis thaliana (Mouse-ear cress) protein is Putative DUF21 domain-containing protein At3g13070, chloroplastic (CBSDUFCH1).